A 199-amino-acid polypeptide reads, in one-letter code: Pneumococcal vaccine antigen A homolog (199 aa).

The protein localises to the cell surface. The polypeptide is Pneumococcal vaccine antigen A homolog (pvaA) (Streptococcus pyogenes serotype M1).